The sequence spans 938 residues: Isoleucine--tRNA ligase (938 aa).

The short motif at 58 to 68 (PYANGSIHIGH) is the 'HIGH' region element. L-isoleucyl-5'-AMP is bound at residue glutamate 561. The short motif at 602–606 (KMSKS) is the 'KMSKS' region element. Lysine 605 is a binding site for ATP. Cysteine 901, cysteine 904, cysteine 921, and cysteine 924 together coordinate Zn(2+).

This sequence belongs to the class-I aminoacyl-tRNA synthetase family. IleS type 1 subfamily. Monomer. Requires Zn(2+) as cofactor.

The protein localises to the cytoplasm. The catalysed reaction is tRNA(Ile) + L-isoleucine + ATP = L-isoleucyl-tRNA(Ile) + AMP + diphosphate. Functionally, catalyzes the attachment of isoleucine to tRNA(Ile). As IleRS can inadvertently accommodate and process structurally similar amino acids such as valine, to avoid such errors it has two additional distinct tRNA(Ile)-dependent editing activities. One activity is designated as 'pretransfer' editing and involves the hydrolysis of activated Val-AMP. The other activity is designated 'posttransfer' editing and involves deacylation of mischarged Val-tRNA(Ile). The chain is Isoleucine--tRNA ligase from Citrobacter koseri (strain ATCC BAA-895 / CDC 4225-83 / SGSC4696).